The sequence spans 191 residues: Ribosome maturation factor RimM (191 aa).

Residues 102–185 (EEEYHVSQLI…RIEINPPKGL (84 aa)) enclose the PRC barrel domain.

It belongs to the RimM family. In terms of assembly, binds ribosomal protein uS19.

It is found in the cytoplasm. Functionally, an accessory protein needed during the final step in the assembly of 30S ribosomal subunit, possibly for assembly of the head region. Essential for efficient processing of 16S rRNA. May be needed both before and after RbfA during the maturation of 16S rRNA. It has affinity for free ribosomal 30S subunits but not for 70S ribosomes. This is Ribosome maturation factor RimM from Crocosphaera subtropica (strain ATCC 51142 / BH68) (Cyanothece sp. (strain ATCC 51142)).